The sequence spans 123 residues: Small ribosomal subunit protein uS12 (123 aa).

Position 89 is a 3-methylthioaspartic acid (D89).

Belongs to the universal ribosomal protein uS12 family. Part of the 30S ribosomal subunit. Contacts proteins S8 and S17. May interact with IF1 in the 30S initiation complex.

Its function is as follows. With S4 and S5 plays an important role in translational accuracy. In terms of biological role, interacts with and stabilizes bases of the 16S rRNA that are involved in tRNA selection in the A site and with the mRNA backbone. Located at the interface of the 30S and 50S subunits, it traverses the body of the 30S subunit contacting proteins on the other side and probably holding the rRNA structure together. The combined cluster of proteins S8, S12 and S17 appears to hold together the shoulder and platform of the 30S subunit. The sequence is that of Small ribosomal subunit protein uS12 from Orientia tsutsugamushi (strain Ikeda) (Rickettsia tsutsugamushi).